A 426-amino-acid polypeptide reads, in one-letter code: Glutamyl-tRNA reductase (426 aa).

Residues 49 to 52, Ser109, 114 to 116, and Gln120 contribute to the substrate site; these read TCNR and EGQ. Catalysis depends on Cys50, which acts as the Nucleophile. NADP(+) is bound at residue 189–194; the sequence is GAGETG.

This sequence belongs to the glutamyl-tRNA reductase family. As to quaternary structure, homodimer.

The enzyme catalyses (S)-4-amino-5-oxopentanoate + tRNA(Glu) + NADP(+) = L-glutamyl-tRNA(Glu) + NADPH + H(+). The protein operates within porphyrin-containing compound metabolism; protoporphyrin-IX biosynthesis; 5-aminolevulinate from L-glutamyl-tRNA(Glu): step 1/2. In terms of biological role, catalyzes the NADPH-dependent reduction of glutamyl-tRNA(Glu) to glutamate 1-semialdehyde (GSA). This Chlorobaculum parvum (strain DSM 263 / NCIMB 8327) (Chlorobium vibrioforme subsp. thiosulfatophilum) protein is Glutamyl-tRNA reductase (hemA).